A 343-amino-acid polypeptide reads, in one-letter code: Uroporphyrinogen decarboxylase (343 aa).

Substrate-binding positions include arginine 23 to arginine 27, aspartate 73, tyrosine 149, threonine 204, and histidine 320.

The protein belongs to the uroporphyrinogen decarboxylase family. Homodimer.

It localises to the cytoplasm. The catalysed reaction is uroporphyrinogen III + 4 H(+) = coproporphyrinogen III + 4 CO2. Its pathway is porphyrin-containing compound metabolism; protoporphyrin-IX biosynthesis; coproporphyrinogen-III from 5-aminolevulinate: step 4/4. Its function is as follows. Catalyzes the decarboxylation of four acetate groups of uroporphyrinogen-III to yield coproporphyrinogen-III. The sequence is that of Uroporphyrinogen decarboxylase from Bradyrhizobium sp. (strain BTAi1 / ATCC BAA-1182).